Consider the following 210-residue polypeptide: Uracil phosphoribosyltransferase (210 aa).

Residues Arg-80, Arg-105, and Asp-132 to Ser-140 each bind 5-phospho-alpha-D-ribose 1-diphosphate. Uracil-binding positions include Ile-195 and Gly-200–Ala-202. Asp-201 lines the 5-phospho-alpha-D-ribose 1-diphosphate pocket.

It belongs to the UPRTase family. Mg(2+) serves as cofactor.

The enzyme catalyses UMP + diphosphate = 5-phospho-alpha-D-ribose 1-diphosphate + uracil. It functions in the pathway pyrimidine metabolism; UMP biosynthesis via salvage pathway; UMP from uracil: step 1/1. With respect to regulation, allosterically activated by GTP. Its function is as follows. Catalyzes the conversion of uracil and 5-phospho-alpha-D-ribose 1-diphosphate (PRPP) to UMP and diphosphate. This Caldanaerobacter subterraneus subsp. tengcongensis (strain DSM 15242 / JCM 11007 / NBRC 100824 / MB4) (Thermoanaerobacter tengcongensis) protein is Uracil phosphoribosyltransferase.